Reading from the N-terminus, the 276-residue chain is Light-independent protochlorophyllide reductase iron-sulfur ATP-binding protein (276 aa).

ATP-binding positions include 12-17 and K41; that span reads GIGKST. Residue S16 coordinates Mg(2+). C97 and C131 together coordinate [4Fe-4S] cluster. 182-183 provides a ligand contact to ATP; it reads NR.

It belongs to the NifH/BchL/ChlL family. Homodimer. Protochlorophyllide reductase is composed of three subunits; BchL, BchN and BchB. [4Fe-4S] cluster serves as cofactor.

The enzyme catalyses chlorophyllide a + oxidized 2[4Fe-4S]-[ferredoxin] + 2 ADP + 2 phosphate = protochlorophyllide a + reduced 2[4Fe-4S]-[ferredoxin] + 2 ATP + 2 H2O. Its pathway is porphyrin-containing compound metabolism; bacteriochlorophyll biosynthesis (light-independent). Its function is as follows. Component of the dark-operative protochlorophyllide reductase (DPOR) that uses Mg-ATP and reduced ferredoxin to reduce ring D of protochlorophyllide (Pchlide) to form chlorophyllide a (Chlide). This reaction is light-independent. The L component serves as a unique electron donor to the NB-component of the complex, and binds Mg-ATP. The protein is Light-independent protochlorophyllide reductase iron-sulfur ATP-binding protein of Chlorobium chlorochromatii (strain CaD3).